Consider the following 146-residue polypeptide: MTKVYAHSIQQERVVDRIALLERCLDLSNSLPTAKRLAAVAVATILAIALLVVAGLLFSGVLCSPVSVVAASLFFGVGAFLLGGALVGGVLTTEAVTRERLHRSQTLMWNNLCCKTAEVEQKISTASANAKSNDKLENSVSKKGAS.

2 helical membrane passes run A38–F58 and V68–G88.

Its subcellular location is the secreted. The protein localises to the host vacuole. It localises to the host pathogen-containing vacuole. It is found in the host pathogen-containing vacuole membrane. Host inclusion membrane protein probably involved in early modification events of the chlamydial inclusion. The sequence is that of Inclusion membrane protein D from Chlamydia trachomatis serovar L2 (strain ATCC VR-902B / DSM 19102 / 434/Bu).